Consider the following 877-residue polypeptide: Alpha-glucosidase (877 aa).

Residues 1 to 23 (MATVGVLLLCLCLCLFAPRLCSS) form the signal peptide. A disordered region spans residues 89-115 (VPQDIIPRPAPGDVLHDAPPASSAPLQ). N-linked (GlcNAc...) asparagine glycans are attached at residues asparagine 191, asparagine 298, asparagine 338, and asparagine 391. Catalysis depends on residues aspartate 437 and glutamate 440. Asparagine 471 carries N-linked (GlcNAc...) asparagine glycosylation. Residue aspartate 534 is the Proton donor of the active site. A glycan (N-linked (GlcNAc...) asparagine) is linked at asparagine 570.

This sequence belongs to the glycosyl hydrolase 31 family. In terms of tissue distribution, high levels seen in the aleurone and scutellum after germination, while low levels are found in developing seeds.

The enzyme catalyses Hydrolysis of terminal, non-reducing (1-&gt;4)-linked alpha-D-glucose residues with release of alpha-D-glucose.. In Hordeum vulgare (Barley), this protein is Alpha-glucosidase.